The primary structure comprises 46 residues: Defensin Tk-AMP-D6 (46 aa).

Cystine bridges form between Cys-3–Cys-46, Cys-14–Cys-34, Cys-20–Cys-40, and Cys-24–Cys-42.

In terms of biological role, plant defense peptide. The protein is Defensin Tk-AMP-D6 of Triticum kiharae (Wheat).